Consider the following 57-residue polypeptide: Potassium channel toxin KTx1 (57 aa).

The N-terminal stretch at 1–13 is a signal peptide; it reads FLVLLLVSLMCYA. Residues 14 to 18 constitute a propeptide that is removed on maturation; sequence EIAEG. Cystine bridges form between Cys24-Cys37, Cys30-Cys42, and Cys36-Cys51.

This sequence belongs to the scorpion calcin-like family. KTX subfamily. Expressed by the venom gland.

Its subcellular location is the secreted. Its function is as follows. This recombinant peptide inhibits voltage-gated potassium channels mKv1.3/KCNA3 (IC(50)=1.70 uM), mKv1.1/KCNA1 (10 uM inhibits 40% of currents) and hKv1.2/KCNA2 (10 uM inhibits 42% of currents). May also increase intracellular calcium release through the activation of nuclear inositol 1,4,5-trisphosphate receptors (ITPR) of cardiomyocytes, thereby causing an increase in the contraction frequency of these cells. The chain is Potassium channel toxin KTx1 from Isometrus maculatus (Lesser brown scorpion).